Reading from the N-terminus, the 313-residue chain is Glutaminase (313 aa).

7 residues coordinate substrate: S73, N123, E167, N174, Y198, Y249, and V267.

It belongs to the glutaminase family. Homotetramer.

It catalyses the reaction L-glutamine + H2O = L-glutamate + NH4(+). This is Glutaminase from Streptomyces avermitilis (strain ATCC 31267 / DSM 46492 / JCM 5070 / NBRC 14893 / NCIMB 12804 / NRRL 8165 / MA-4680).